Here is a 1217-residue protein sequence, read N- to C-terminus: ATP-dependent helicase/nuclease subunit A (1217 aa).

The UvrD-like helicase ATP-binding domain occupies 10 to 475 (VIWTDAQWQS…IDLSQNFRSR (466 aa)). 31–38 (AAAGSGKT) provides a ligand contact to ATP. The region spanning 476 to 786 (KEVLSTTNYI…RMMTIHSSKG (311 aa)) is the UvrD-like helicase C-terminal domain.

The protein belongs to the helicase family. AddA subfamily. In terms of assembly, heterodimer of AddA and AddB/RexB. The cofactor is Mg(2+).

The catalysed reaction is Couples ATP hydrolysis with the unwinding of duplex DNA by translocating in the 3'-5' direction.. It catalyses the reaction ATP + H2O = ADP + phosphate + H(+). Functionally, the heterodimer acts as both an ATP-dependent DNA helicase and an ATP-dependent, dual-direction single-stranded exonuclease. Recognizes the chi site generating a DNA molecule suitable for the initiation of homologous recombination. The AddA nuclease domain is required for chi fragment generation; this subunit has the helicase and 3' -&gt; 5' nuclease activities. This is ATP-dependent helicase/nuclease subunit A from Staphylococcus aureus (strain MW2).